The primary structure comprises 375 residues: Succinyl-diaminopimelate desuccinylase (375 aa).

Residue histidine 66 coordinates Zn(2+). Aspartate 68 is an active-site residue. Aspartate 99 lines the Zn(2+) pocket. Glutamate 133 (proton acceptor) is an active-site residue. Zn(2+) contacts are provided by glutamate 134, glutamate 162, and histidine 348.

This sequence belongs to the peptidase M20A family. DapE subfamily. In terms of assembly, homodimer. Requires Zn(2+) as cofactor. Co(2+) serves as cofactor.

It catalyses the reaction N-succinyl-(2S,6S)-2,6-diaminopimelate + H2O = (2S,6S)-2,6-diaminopimelate + succinate. It participates in amino-acid biosynthesis; L-lysine biosynthesis via DAP pathway; LL-2,6-diaminopimelate from (S)-tetrahydrodipicolinate (succinylase route): step 3/3. In terms of biological role, catalyzes the hydrolysis of N-succinyl-L,L-diaminopimelic acid (SDAP), forming succinate and LL-2,6-diaminopimelate (DAP), an intermediate involved in the bacterial biosynthesis of lysine and meso-diaminopimelic acid, an essential component of bacterial cell walls. This is Succinyl-diaminopimelate desuccinylase from Escherichia coli O139:H28 (strain E24377A / ETEC).